The sequence spans 172 residues: Large ribosomal subunit protein bL9 (172 aa).

The protein belongs to the bacterial ribosomal protein bL9 family.

Binds to the 23S rRNA. This is Large ribosomal subunit protein bL9 from Chlamydia abortus (strain DSM 27085 / S26/3) (Chlamydophila abortus).